Reading from the N-terminus, the 128-residue chain is UPF0325 protein YaeH (128 aa).

Belongs to the UPF0325 family.

The protein is UPF0325 protein YaeH of Escherichia coli (strain ATCC 8739 / DSM 1576 / NBRC 3972 / NCIMB 8545 / WDCM 00012 / Crooks).